The chain runs to 202 residues: UPF0301 protein mlr7511 (202 aa).

This sequence belongs to the UPF0301 (AlgH) family.

The protein is UPF0301 protein mlr7511 of Mesorhizobium japonicum (strain LMG 29417 / CECT 9101 / MAFF 303099) (Mesorhizobium loti (strain MAFF 303099)).